Reading from the N-terminus, the 265-residue chain is Probable ribose-5-phosphate isomerase 2 (265 aa).

Position 2 is an N-acetylalanine (A2). Residue S96 is modified to Phosphoserine.

Belongs to the ribose 5-phosphate isomerase family.

The protein resides in the cytoplasm. It carries out the reaction aldehydo-D-ribose 5-phosphate = D-ribulose 5-phosphate. It functions in the pathway carbohydrate degradation; pentose phosphate pathway; D-ribose 5-phosphate from D-ribulose 5-phosphate (non-oxidative stage): step 1/1. In terms of biological role, catalyzes the reversible conversion of ribose-5-phosphate to ribulose 5-phosphate. The polypeptide is Probable ribose-5-phosphate isomerase 2 (RPI2) (Arabidopsis thaliana (Mouse-ear cress)).